The chain runs to 119 residues: Large ribosomal subunit protein uL18 (119 aa).

Belongs to the universal ribosomal protein uL18 family. Part of the 50S ribosomal subunit; part of the 5S rRNA/L5/L18/L25 subcomplex. Contacts the 5S and 23S rRNAs.

Its function is as follows. This is one of the proteins that bind and probably mediate the attachment of the 5S RNA into the large ribosomal subunit, where it forms part of the central protuberance. The chain is Large ribosomal subunit protein uL18 from Anaeromyxobacter dehalogenans (strain 2CP-1 / ATCC BAA-258).